A 285-amino-acid polypeptide reads, in one-letter code: Elongation factor Ts (285 aa).

Residues 82–85 are involved in Mg(2+) ion dislocation from EF-Tu; that stretch reads TDFV.

Belongs to the EF-Ts family.

Its subcellular location is the cytoplasm. Associates with the EF-Tu.GDP complex and induces the exchange of GDP to GTP. It remains bound to the aminoacyl-tRNA.EF-Tu.GTP complex up to the GTP hydrolysis stage on the ribosome. This chain is Elongation factor Ts, found in Yersinia pseudotuberculosis serotype O:1b (strain IP 31758).